The chain runs to 330 residues: Ketol-acid reductoisomerase (NADP(+)) (330 aa).

The KARI N-terminal Rossmann domain occupies 1 to 181; the sequence is MKVFYDSDFK…GLSRAGVIQT (181 aa). NADP(+)-binding positions include 24–27, R47, S52, and 82–85; these read YGSQ and DELQ. Residue H107 is part of the active site. G133 is a binding site for NADP(+). Positions 182-327 constitute a KARI C-terminal knotted domain; it reads TFKEETETDL…AKLRKMCGLE (146 aa). 4 residues coordinate Mg(2+): D190, E194, E226, and E230. S251 contacts substrate.

It belongs to the ketol-acid reductoisomerase family. Requires Mg(2+) as cofactor.

The enzyme catalyses (2R)-2,3-dihydroxy-3-methylbutanoate + NADP(+) = (2S)-2-acetolactate + NADPH + H(+). It catalyses the reaction (2R,3R)-2,3-dihydroxy-3-methylpentanoate + NADP(+) = (S)-2-ethyl-2-hydroxy-3-oxobutanoate + NADPH + H(+). It participates in amino-acid biosynthesis; L-isoleucine biosynthesis; L-isoleucine from 2-oxobutanoate: step 2/4. It functions in the pathway amino-acid biosynthesis; L-valine biosynthesis; L-valine from pyruvate: step 2/4. Functionally, involved in the biosynthesis of branched-chain amino acids (BCAA). Catalyzes an alkyl-migration followed by a ketol-acid reduction of (S)-2-acetolactate (S2AL) to yield (R)-2,3-dihydroxy-isovalerate. In the isomerase reaction, S2AL is rearranged via a Mg-dependent methyl migration to produce 3-hydroxy-3-methyl-2-ketobutyrate (HMKB). In the reductase reaction, this 2-ketoacid undergoes a metal-dependent reduction by NADPH to yield (R)-2,3-dihydroxy-isovalerate. This Methanococcus maripaludis (strain C5 / ATCC BAA-1333) protein is Ketol-acid reductoisomerase (NADP(+)).